A 427-amino-acid polypeptide reads, in one-letter code: Septin-8 (427 aa).

Positions 39 to 305 (QGFCFNILCV…ELYRRCKLEE (267 aa)) constitute a Septin-type G domain. Residues 49-56 (GETGIGKS) are G1 motif. Residues 49–56 (GETGIGKS), Gly-104, 185–193 (KADTISKSE), Gly-239, and Arg-254 contribute to the GTP site. Residues 101 to 104 (DTVG) are G3 motif. Residues 184–187 (AKAD) form a G4 motif region. Residues 321–409 (QETYEAKRKE…KAAMEALQSQ (89 aa)) are a coiled coil. Residues 373–427 (RVHQEESKKVEDKRRDLEEEMNSFNRRKAAMEALQSQSFQATSQQPLKKDKDRKN) form a disordered region. Positions 374–389 (VHQEESKKVEDKRRDL) are enriched in basic and acidic residues. Over residues 406 to 418 (LQSQSFQATSQQP) the composition is skewed to polar residues.

It belongs to the TRAFAC class TrmE-Era-EngA-EngB-Septin-like GTPase superfamily. Septin GTPase family.

It localises to the cytoplasm. The protein resides in the cytoskeleton. Its subcellular location is the synapse. It is found in the cell projection. The protein localises to the axon. It localises to the cytoplasmic vesicle. The protein resides in the secretory vesicle. Its subcellular location is the synaptic vesicle membrane. It is found in the presynapse. In Xenopus tropicalis (Western clawed frog), this protein is Septin-8.